A 38-amino-acid chain; its full sequence is Kunitz-type trypsin inhibitor beta chain (38 aa).

The protein belongs to the protease inhibitor I3 (leguminous Kunitz-type inhibitor) family. Heterodimer of an alpha and a beta chain linked by a disulfide bond.

Inhibition of trypsin. The sequence is that of Kunitz-type trypsin inhibitor beta chain from Neltuma juliflora (Mesquite).